A 151-amino-acid polypeptide reads, in one-letter code: Small ribosomal subunit protein uS15 (151 aa).

It belongs to the universal ribosomal protein uS15 family.

The sequence is that of Small ribosomal subunit protein uS15 (RPS13) from Pisum sativum (Garden pea).